The following is a 119-amino-acid chain: Nascent polypeptide-associated complex protein (119 aa).

The 69-residue stretch at 5–73 (RMNSREMRRL…FRETPKKQEG (69 aa)) folds into the NAC-A/B domain.

Belongs to the NAC-alpha family. Homodimer. Interacts with the ribosome. Binds ribosomal RNA.

Its function is as follows. Contacts the emerging nascent chain on the ribosome. In Thermoplasma volcanium (strain ATCC 51530 / DSM 4299 / JCM 9571 / NBRC 15438 / GSS1), this protein is Nascent polypeptide-associated complex protein.